Reading from the N-terminus, the 310-residue chain is D-alanine--D-alanine ligase (310 aa).

Residues 107-302 enclose the ATP-grasp domain; sequence KQAFQAARLT…FEDLVERILA (196 aa). Position 135-188 (135-188) interacts with ATP; the sequence is EFSLPVVVKPSQEGSSVGVSIVKKESEFAAAMKEAFRYDREILVEQFIKGSEVQ. Mg(2+) contacts are provided by D256, E269, and N271.

Belongs to the D-alanine--D-alanine ligase family. Mg(2+) serves as cofactor. It depends on Mn(2+) as a cofactor.

It localises to the cytoplasm. The enzyme catalyses 2 D-alanine + ATP = D-alanyl-D-alanine + ADP + phosphate + H(+). Its pathway is cell wall biogenesis; peptidoglycan biosynthesis. Functionally, cell wall formation. The protein is D-alanine--D-alanine ligase of Geotalea uraniireducens (strain Rf4) (Geobacter uraniireducens).